The following is a 235-amino-acid chain: Small ribosomal subunit protein uS2 (235 aa).

The protein belongs to the universal ribosomal protein uS2 family.

This Geobacillus sp. (strain WCH70) protein is Small ribosomal subunit protein uS2.